We begin with the raw amino-acid sequence, 506 residues long: Beta-glucosidase 9 (506 aa).

An N-terminal signal peptide occupies residues 1-22 (MKHFSLLFIFLVILLATSYSDA). Residues Gln-42, His-139, and 184-185 (NE) each bind a beta-D-glucoside. Catalysis depends on Glu-185, which acts as the Proton donor. Cys-204 and Cys-212 are joined by a disulfide. Residues Asn-211 and Asn-216 are each glycosylated (N-linked (GlcNAc...) asparagine). An a beta-D-glucoside-binding site is contributed by Tyr-328. N-linked (GlcNAc...) asparagine glycosylation occurs at Asn-363. Glu-396 is a binding site for a beta-D-glucoside. Glu-396 functions as the Nucleophile in the catalytic mechanism. Asn-429 carries N-linked (GlcNAc...) asparagine glycosylation. Residues Trp-439 and Phe-455 each contribute to the a beta-D-glucoside site. 3 N-linked (GlcNAc...) asparagine glycosylation sites follow: Asn-461, Asn-483, and Asn-499.

Belongs to the glycosyl hydrolase 1 family.

The enzyme catalyses Hydrolysis of terminal, non-reducing beta-D-glucosyl residues with release of beta-D-glucose.. This chain is Beta-glucosidase 9, found in Arabidopsis thaliana (Mouse-ear cress).